We begin with the raw amino-acid sequence, 195 residues long: Replication restart protein PriC (195 aa).

The protein belongs to the PriC family. Monomer. Component of the replication restart primosome, which is composed of PriA, PriB, PriC, DnaB and DnaT; DnaG primase associates transiently with this complex. Interacts with the C-terminus of SSB; this interaction is required to load the main replicative helicase onto substrate replication forks. Interacts with helicase DnaB alone and in the DnaB-DnaC complex, probably 1:1 binding with DnaB.

Functionally, involved in the restart of stalled replication forks, which reloads the DnaB replicative helicase on sites other than the origin of replication. Recognizes abandoned replication forks and remodels DNA single-stranded binding protein (SSB) on ssDNA to uncover a loading site for DnaB. There are several restart pathways, the PriA-PriC pathway is a minor restart pathway. Part of the minor PriC-Rep pathway for restart of stalled replication forks, which has a different substrate specificity than PriA. Part of the major restart pathway with PriA, PriB, DnaB, DnaT and DnaG primase. priB and priC have redundant roles in the cell. The chain is Replication restart protein PriC from Haemophilus influenzae (strain ATCC 51907 / DSM 11121 / KW20 / Rd).